The sequence spans 303 residues: 4-hydroxy-3-methylbut-2-enyl diphosphate reductase (303 aa).

Cys12 contacts [4Fe-4S] cluster. (2E)-4-hydroxy-3-methylbut-2-enyl diphosphate-binding residues include His42 and His75. The dimethylallyl diphosphate site is built by His42 and His75. Isopentenyl diphosphate is bound by residues His42 and His75. Cys97 contacts [4Fe-4S] cluster. (2E)-4-hydroxy-3-methylbut-2-enyl diphosphate is bound at residue His125. Residue His125 coordinates dimethylallyl diphosphate. Residue His125 participates in isopentenyl diphosphate binding. Glu127 acts as the Proton donor in catalysis. (2E)-4-hydroxy-3-methylbut-2-enyl diphosphate is bound at residue Ser164. Residue Cys192 participates in [4Fe-4S] cluster binding. (2E)-4-hydroxy-3-methylbut-2-enyl diphosphate is bound by residues Ser220, Ser221, Asn222, and Ser264. Ser220, Ser221, Asn222, and Ser264 together coordinate dimethylallyl diphosphate. Residues Ser220, Ser221, Asn222, and Ser264 each coordinate isopentenyl diphosphate.

Belongs to the IspH family. The cofactor is [4Fe-4S] cluster.

The catalysed reaction is isopentenyl diphosphate + 2 oxidized [2Fe-2S]-[ferredoxin] + H2O = (2E)-4-hydroxy-3-methylbut-2-enyl diphosphate + 2 reduced [2Fe-2S]-[ferredoxin] + 2 H(+). The enzyme catalyses dimethylallyl diphosphate + 2 oxidized [2Fe-2S]-[ferredoxin] + H2O = (2E)-4-hydroxy-3-methylbut-2-enyl diphosphate + 2 reduced [2Fe-2S]-[ferredoxin] + 2 H(+). Its pathway is isoprenoid biosynthesis; dimethylallyl diphosphate biosynthesis; dimethylallyl diphosphate from (2E)-4-hydroxy-3-methylbutenyl diphosphate: step 1/1. It functions in the pathway isoprenoid biosynthesis; isopentenyl diphosphate biosynthesis via DXP pathway; isopentenyl diphosphate from 1-deoxy-D-xylulose 5-phosphate: step 6/6. Functionally, catalyzes the conversion of 1-hydroxy-2-methyl-2-(E)-butenyl 4-diphosphate (HMBPP) into a mixture of isopentenyl diphosphate (IPP) and dimethylallyl diphosphate (DMAPP). Acts in the terminal step of the DOXP/MEP pathway for isoprenoid precursor biosynthesis. The sequence is that of 4-hydroxy-3-methylbut-2-enyl diphosphate reductase from Neorickettsia sennetsu (strain ATCC VR-367 / Miyayama) (Ehrlichia sennetsu).